The chain runs to 332 residues: 2,3-diketo-L-gulonate reductase (332 aa).

His44 serves as the catalytic Proton donor. NAD(+) contacts are provided by residues 168-174 (ITMVDMS), 224-225 (WK), and 304-306 (GHE).

It belongs to the LDH2/MDH2 oxidoreductase family. DlgD subfamily. In terms of assembly, homodimer.

The protein resides in the cytoplasm. It carries out the reaction 3-dehydro-L-gulonate + NAD(+) = 2,3-dioxo-L-gulonate + NADH + H(+). The enzyme catalyses 3-dehydro-L-gulonate + NADP(+) = 2,3-dioxo-L-gulonate + NADPH + H(+). Its function is as follows. Catalyzes the reduction of 2,3-diketo-L-gulonate in the presence of NADH, to form 3-keto-L-gulonate. This Escherichia coli (strain K12 / MC4100 / BW2952) protein is 2,3-diketo-L-gulonate reductase.